Here is a 141-residue protein sequence, read N- to C-terminus: Protein C19orf12 homolog (141 aa).

A helical membrane pass occupies residues 33-53 (LVAAAGAFLGGLVGGPPGIAV).

This sequence belongs to the C19orf12 family.

It localises to the mitochondrion. It is found in the mitochondrion membrane. The protein localises to the endoplasmic reticulum. The protein resides in the cytoplasm. Its subcellular location is the cytosol. The sequence is that of Protein C19orf12 homolog from Xenopus tropicalis (Western clawed frog).